A 197-amino-acid chain; its full sequence is Pyridoxal 5'-phosphate synthase subunit PdxT (197 aa).

54–56 (GES) provides a ligand contact to L-glutamine. Residue Cys-86 is the Nucleophile of the active site. L-glutamine-binding positions include Arg-113 and 141 to 142 (IR). Residues His-177 and Glu-179 each act as charge relay system in the active site.

Belongs to the glutaminase PdxT/SNO family. In the presence of PdxS, forms a dodecamer of heterodimers. Only shows activity in the heterodimer.

It catalyses the reaction aldehydo-D-ribose 5-phosphate + D-glyceraldehyde 3-phosphate + L-glutamine = pyridoxal 5'-phosphate + L-glutamate + phosphate + 3 H2O + H(+). The enzyme catalyses L-glutamine + H2O = L-glutamate + NH4(+). Its pathway is cofactor biosynthesis; pyridoxal 5'-phosphate biosynthesis. Functionally, catalyzes the hydrolysis of glutamine to glutamate and ammonia as part of the biosynthesis of pyridoxal 5'-phosphate. The resulting ammonia molecule is channeled to the active site of PdxS. The protein is Pyridoxal 5'-phosphate synthase subunit PdxT of Haloarcula marismortui (strain ATCC 43049 / DSM 3752 / JCM 8966 / VKM B-1809) (Halobacterium marismortui).